A 239-amino-acid chain; its full sequence is MARTKKANDEVATDSDSLKLKVAKQAAKLVKDEMVVGLGSGSTANLFIQELGKRVVEEELYIYGVPTSFDSRMMASNSGIPLISLDQCGEIDIAIDGADEVCKKTLSLIKGGGGCHTMEKIVDYHAKEFVVLADEGKLVESLGDKTAVPLEVIPFAYSTVLNKLLDMNTAPAIRSGSGKMGPVITDNGNMIIDVFINIEDAEETETMLNNIPGVLENGIFSKCDKVLVGTSKKVEILKK.

Substrate-binding positions include 40–43, 96–99, and 110–113; these read SGST, DGAD, and KGGG. Glu119 acts as the Proton acceptor in catalysis. Lys137 lines the substrate pocket.

This sequence belongs to the ribose 5-phosphate isomerase family. As to quaternary structure, homodimer.

It catalyses the reaction aldehydo-D-ribose 5-phosphate = D-ribulose 5-phosphate. The protein operates within carbohydrate degradation; pentose phosphate pathway; D-ribose 5-phosphate from D-ribulose 5-phosphate (non-oxidative stage): step 1/1. In terms of biological role, catalyzes the reversible conversion of ribose-5-phosphate to ribulose 5-phosphate. In Methanococcus maripaludis (strain DSM 14266 / JCM 13030 / NBRC 101832 / S2 / LL), this protein is Ribose-5-phosphate isomerase A.